Here is a 179-residue protein sequence, read N- to C-terminus: Inner membrane-spanning protein YciB (179 aa).

5 helical membrane-spanning segments follow: residues Thr-24–Glu-44, Ala-49–His-69, Trp-76–Leu-96, Val-121–Phe-141, and Leu-151–His-171.

It belongs to the YciB family.

Its subcellular location is the cell inner membrane. Its function is as follows. Plays a role in cell envelope biogenesis, maintenance of cell envelope integrity and membrane homeostasis. This Variovorax paradoxus (strain S110) protein is Inner membrane-spanning protein YciB.